The primary structure comprises 344 residues: Lipase chaperone (344 aa).

Residues 14-34 (AVVYGVVGLAAIAGVAMWSGA) form a helical membrane-spanning segment.

It belongs to the lipase chaperone family.

The protein resides in the cell inner membrane. Its function is as follows. May be involved in the folding of the extracellular lipase during its passage through the periplasm. In Burkholderia cepacia (Pseudomonas cepacia), this protein is Lipase chaperone (lifO).